A 262-amino-acid polypeptide reads, in one-letter code: Phosphate import ATP-binding protein PstB 2 (262 aa).

One can recognise an ABC transporter domain in the interval 18-257; the sequence is FVVRNLDLFY…PSDRRTEDYI (240 aa). An ATP-binding site is contributed by 50–57; the sequence is GPSGCGKS.

This sequence belongs to the ABC transporter superfamily. Phosphate importer (TC 3.A.1.7) family. In terms of assembly, the complex is composed of two ATP-binding proteins (PstB), two transmembrane proteins (PstC and PstA) and a solute-binding protein (PstS).

It localises to the cell membrane. The enzyme catalyses phosphate(out) + ATP + H2O = ADP + 2 phosphate(in) + H(+). Functionally, part of the ABC transporter complex PstSACB involved in phosphate import. Responsible for energy coupling to the transport system. This chain is Phosphate import ATP-binding protein PstB 2, found in Symbiobacterium thermophilum (strain DSM 24528 / JCM 14929 / IAM 14863 / T).